The sequence spans 273 residues: Putative phosphoenolpyruvate synthase regulatory protein (273 aa).

153–160 (GVSRSGKT) contributes to the ADP binding site.

The protein belongs to the pyruvate, phosphate/water dikinase regulatory protein family. PSRP subfamily.

It carries out the reaction [pyruvate, water dikinase] + ADP = [pyruvate, water dikinase]-phosphate + AMP + H(+). The enzyme catalyses [pyruvate, water dikinase]-phosphate + phosphate + H(+) = [pyruvate, water dikinase] + diphosphate. Bifunctional serine/threonine kinase and phosphorylase involved in the regulation of the phosphoenolpyruvate synthase (PEPS) by catalyzing its phosphorylation/dephosphorylation. This Leptothrix cholodnii (strain ATCC 51168 / LMG 8142 / SP-6) (Leptothrix discophora (strain SP-6)) protein is Putative phosphoenolpyruvate synthase regulatory protein.